The sequence spans 863 residues: MICAL-like protein 1 (863 aa).

The 107-residue stretch at 2-108 folds into the Calponin-homology (CH) domain; that stretch reads AGPRGALLAW…YVSQYYNHFC (107 aa). Disordered regions lie at residues 119–162 and 224–670; these read RKGL…TPSS and GTRS…PLIK. Positions 125 to 135 are enriched in pro residues; the sequence is CSPPSVAPTPV. 2 stretches are compositionally biased toward low complexity: residues 143–159 and 224–244; these read GEELSSGSLSEQGTGQT and GTRSGTRPGPFSQPKQQHQQQ. Positions 162–225 constitute an LIM zinc-binding domain; that stretch reads STCAACQQHV…EHCARLGPGT (64 aa). Phosphoserine occurs at positions 295 and 309. Residue threonine 318 is modified to Phosphothreonine. Polar residues predominate over residues 325–340; it reads LQQENLVEQAGSSSLV. A compositionally biased stretch (pro residues) spans 384–395; it reads APLPPSSSPGPP. The residue at position 391 (serine 391) is a Phosphoserine. The NPF1 motif lies at 425–427; it reads NPF. Residues 427–438 are compositionally biased toward acidic residues; sequence FEEEEEDKEEEA. Residues 439–450 show a composition bias toward low complexity; that stretch reads PAAPSLATSPAL. Residues threonine 467 and threonine 469 each carry the phosphothreonine modification. Phosphoserine is present on residues serine 470, serine 471, serine 484, and serine 486. Composition is skewed to low complexity over residues 482–495, 505–520, and 553–566; these read APSASPLALHASRL, PSPALSVESLSSESAS, and SLSTNSSLASSGEL. 2 positions are modified to phosphoserine: serine 578 and serine 621. The NPF2 signature appears at 633–635; it reads NPF. Residues 638 to 656 are compositionally biased toward low complexity; it reads KPSPAASPATKKATKGSKP. Residues 652 to 863 form a mediates the interaction with RAB13 and RAB35 and intramolecular interaction with the CH domain region; the sequence is KGSKPVRPPA…AKSKSPRDKS (212 aa). The bMERB domain occupies 671–818; the sequence is RKVQADQYIP…EEEEDKMLEA (148 aa). A coiled-coil region spans residues 682 to 711; the sequence is EDIHGEMDTIERRLDALEHRGVLLEEKLRG. A necessary and sufficient to associate with tubular recycling endosome membranes, mediate phosphatidic acid-binding and membrane tubulation region spans residues 700-863; that stretch reads HRGVLLEEKL…AKSKSPRDKS (164 aa). Serine 740 is modified (phosphoserine). The stretch at 785–830 forms a coiled coil; that stretch reads MQELVTLIEQRNAIINCLDEDRQREEEEDKMLEAMIKKKEFQREAE.

Homooligomer. Interacts (via NPF1 motif) with EHD1 (via EH domain); the interaction is direct and probably recruits EHD1 to membranes. Interacts with EHD3 (via EH domain). Interacts with RAB35 (GTP-bound form); the interaction is direct and probably recruits MICALL1 to membranes. Interacts with ACAP2; the interaction is indirect through RAB35. Interacts with RAB8A (GTP-bound form); regulates RAB8A association with recycling endosomes. Interacts with RAB13 (GTP-bound form). Interacts with ARF6 (GTP-bound form). Interacts with PACSIN2 (via the SH3 domain). Interacts with DPYSL2.

Its subcellular location is the recycling endosome membrane. The protein resides in the late endosome membrane. The protein localises to the cell projection. It localises to the cilium membrane. It is found in the cytoplasm. Its subcellular location is the cytoskeleton. The protein resides in the microtubule organizing center. The protein localises to the centrosome. It localises to the centriole. Functionally, lipid-binding protein with higher affinity for phosphatidic acid, a lipid enriched in recycling endosome membranes. On endosome membranes, acts as a downstream effector of Rab proteins recruiting cytosolic proteins to regulate membrane tubulation. Involved in a late step of receptor-mediated endocytosis regulating for instance endocytosed-EGF receptor trafficking. Alternatively, regulates slow endocytic recycling of endocytosed proteins back to the plasma membrane. Also involved in cargo protein delivery to the plasma membrane. Plays a role in ciliogenesis coordination, recruits EHD1 to primary cilium where it is anchored to the centriole through interaction with tubulins. May indirectly play a role in neurite outgrowth. The polypeptide is MICAL-like protein 1 (MICALL1) (Homo sapiens (Human)).